A 751-amino-acid chain; its full sequence is Valine--tRNA ligase (751 aa).

Lys-520 is a binding site for ATP.

Belongs to the class-I aminoacyl-tRNA synthetase family. ValS type 2 subfamily.

The protein resides in the cytoplasm. The catalysed reaction is tRNA(Val) + L-valine + ATP = L-valyl-tRNA(Val) + AMP + diphosphate. Catalyzes the attachment of valine to tRNA(Val). As ValRS can inadvertently accommodate and process structurally similar amino acids such as threonine, to avoid such errors, it has a 'posttransfer' editing activity that hydrolyzes mischarged Thr-tRNA(Val) in a tRNA-dependent manner. This Nanoarchaeum equitans (strain Kin4-M) protein is Valine--tRNA ligase (valS).